The following is a 396-amino-acid chain: Elongation factor Tu 1 (396 aa).

In terms of domain architecture, tr-type G spans 10–206 (KPHVNVGTIG…QIDSYIPEPE (197 aa)). Residues 19–26 (GHIDHGKT) are G1. 19-26 (GHIDHGKT) serves as a coordination point for GTP. Thr-26 contacts Mg(2+). Residues 60–64 (GITIA) form a G2 region. The tract at residues 81–84 (DCPG) is G3. Residues 81-85 (DCPGH) and 136-139 (NKCD) contribute to the GTP site. The G4 stretch occupies residues 136–139 (NKCD). The tract at residues 174–176 (SAL) is G5.

This sequence belongs to the TRAFAC class translation factor GTPase superfamily. Classic translation factor GTPase family. EF-Tu/EF-1A subfamily. As to quaternary structure, monomer.

Its subcellular location is the cytoplasm. It catalyses the reaction GTP + H2O = GDP + phosphate + H(+). Its function is as follows. GTP hydrolase that promotes the GTP-dependent binding of aminoacyl-tRNA to the A-site of ribosomes during protein biosynthesis. In Desulfotalea psychrophila (strain LSv54 / DSM 12343), this protein is Elongation factor Tu 1.